A 307-amino-acid polypeptide reads, in one-letter code: Small ribosomal subunit protein uS5m (307 aa).

The transit peptide at 1 to 13 directs the protein to the mitochondrion; that stretch reads MFKRQLSTSVRYL. In terms of domain architecture, S5 DRBM spans 144 to 208; the sequence is LTMKPLVMKR…WDAVRNLKEI (65 aa).

Belongs to the universal ribosomal protein uS5 family. In terms of assembly, component of the mitochondrial small ribosomal subunit (mt-SSU). Mature yeast 74S mitochondrial ribosomes consist of a small (37S) and a large (54S) subunit. The 37S small subunit contains a 15S ribosomal RNA (15S mt-rRNA) and 34 different proteins. The 54S large subunit contains a 21S rRNA (21S mt-rRNA) and 46 different proteins. uS3m, uS4m and uS5m form the narrow entry site of the mRNA channel.

The protein localises to the mitochondrion. Functionally, component of the mitochondrial ribosome (mitoribosome), a dedicated translation machinery responsible for the synthesis of mitochondrial genome-encoded proteins, including at least some of the essential transmembrane subunits of the mitochondrial respiratory chain. The mitoribosomes are attached to the mitochondrial inner membrane and translation products are cotranslationally integrated into the membrane. The chain is Small ribosomal subunit protein uS5m (MRPS5) from Saccharomyces cerevisiae (strain ATCC 204508 / S288c) (Baker's yeast).